Consider the following 194-residue polypeptide: NAD(P)H-quinone oxidoreductase subunit I (194 aa).

4Fe-4S ferredoxin-type domains follow at residues 55–84 (GRIHYEFDKCIACEVCVRVCPINLPVVDWE) and 95–124 (NHYSIDFGVCIFCGNCVEYCPTNCLSMTEE). [4Fe-4S] cluster contacts are provided by C64, C67, C70, C74, C104, C107, C110, and C114. Positions 173 to 194 (DLPANAPRPGARPEDLVEKTEA) are disordered. Basic and acidic residues predominate over residues 183–194 (ARPEDLVEKTEA).

The protein belongs to the complex I 23 kDa subunit family. As to quaternary structure, NDH-1 is composed of at least 11 different subunits. [4Fe-4S] cluster is required as a cofactor.

It is found in the cellular thylakoid membrane. The catalysed reaction is a plastoquinone + NADH + (n+1) H(+)(in) = a plastoquinol + NAD(+) + n H(+)(out). It carries out the reaction a plastoquinone + NADPH + (n+1) H(+)(in) = a plastoquinol + NADP(+) + n H(+)(out). In terms of biological role, NDH-1 shuttles electrons from an unknown electron donor, via FMN and iron-sulfur (Fe-S) centers, to quinones in the respiratory and/or the photosynthetic chain. The immediate electron acceptor for the enzyme in this species is believed to be plastoquinone. Couples the redox reaction to proton translocation, and thus conserves the redox energy in a proton gradient. In Nostoc sp. (strain PCC 7120 / SAG 25.82 / UTEX 2576), this protein is NAD(P)H-quinone oxidoreductase subunit I.